The primary structure comprises 122 residues: MICOS complex subunit MIC13 homolog QIL1 (122 aa).

A helical membrane pass occupies residues 9–25; that stretch reads GGLVAATVYYTQKVGIW.

It belongs to the MICOS complex subunit Mic13 family. As to quaternary structure, component of the mitochondrial contact site and cristae organizing system (MICOS) complex.

Its subcellular location is the mitochondrion inner membrane. In terms of biological role, component of the MICOS complex, a large protein complex of the mitochondrial inner membrane that plays crucial roles in the maintenance of crista junctions, inner membrane architecture, and formation of contact sites to the outer membrane. This Drosophila melanogaster (Fruit fly) protein is MICOS complex subunit MIC13 homolog QIL1.